Reading from the N-terminus, the 320-residue chain is Pyrroline-5-carboxylate reductase 2 (320 aa).

Serine 2 bears the N-acetylserine mark. NADP(+)-binding positions include 6-11 (IGAGQL) and serine 34. 9 residues coordinate NADPH: alanine 8, glutamine 10, leucine 11, serine 34, glutamate 36, asparagine 56, valine 70, lysine 71, and alanine 97. NADP(+) contacts are provided by residues asparagine 56, 69 to 72 (AVKP), and 95 to 97 (CAA). Residue glutamate 164 participates in L-proline binding. Residue asparagine 230 coordinates NADPH. L-proline is bound by residues alanine 237 and threonine 238. The segment at 298–320 (TTLTPTSSGKLLTRSPVPGGKKD) is disordered. At serine 304 the chain carries Phosphoserine.

It belongs to the pyrroline-5-carboxylate reductase family. Homodecamer; composed of 5 homodimers. Interacts with LTO1.

The protein localises to the cytoplasm. It is found in the mitochondrion. It catalyses the reaction L-proline + NADP(+) = (S)-1-pyrroline-5-carboxylate + NADPH + 2 H(+). It carries out the reaction L-proline + NAD(+) = (S)-1-pyrroline-5-carboxylate + NADH + 2 H(+). It functions in the pathway amino-acid biosynthesis; L-proline biosynthesis; L-proline from L-glutamate 5-semialdehyde: step 1/1. Oxidoreductase that catalyzes the last step in proline biosynthesis, which corresponds to the reduction of pyrroline-5-carboxylate to L-proline using NAD(P)H. At physiologic concentrations, has higher specific activity in the presence of NADH. Involved in cellular response to oxidative stress. In some cell types, such as erythrocytes, its primary function may be the generation of NADP(+). This is Pyrroline-5-carboxylate reductase 2 (PYCR2) from Bos taurus (Bovine).